The sequence spans 107 residues: MMKVLVVVALLVTLISYSSSEGIDDLEADELLSLMANEQTRKECIPKHHECTSNKHGCCRGNFFKYKCRCTTVVTQDGEQTERCFCGTPPHHKAAELVVGFGKKIFG.

The first 20 residues, 1 to 20, serve as a signal peptide directing secretion; the sequence is MMKVLVVVALLVTLISYSSS. The propeptide occupies 21–41; that stretch reads EGIDDLEADELLSLMANEQTR. Cystine bridges form between Cys-44–Cys-59, Cys-51–Cys-68, Cys-58–Cys-86, and Cys-70–Cys-84.

Belongs to the neurotoxin 19 (CSTX) family. 04 (U1-Lctx) subfamily. As to expression, expressed by the venom gland.

The protein resides in the secreted. The sequence is that of U1-lycotoxin-Ls1a from Lycosa singoriensis (Wolf spider).